A 256-amino-acid chain; its full sequence is EF-hand calcium-binding domain-containing protein 4A (256 aa).

Over residues 1-10 (MAHLGSRRRM) the composition is skewed to basic residues. The interval 1 to 32 (MAHLGSRRRMSPGLRTRIAHRKAHRTPPSPLI) is disordered. 2 consecutive EF-hand domains span residues 41-69 (KAHE…QNEL) and 71-106 (LTPE…LLGV). The Ca(2+) site is built by Asp84, Ser86, Asn88, Tyr90, and Glu95. The stretch at 190 to 235 (IRDVHHEKDTLEQALKRKETDHGREVRCLYEEMEQQIKIERERLLK) forms a coiled coil.

This sequence belongs to the EFCAB4 family.

The polypeptide is EF-hand calcium-binding domain-containing protein 4A (cracr2b) (Xenopus tropicalis (Western clawed frog)).